An 84-amino-acid polypeptide reads, in one-letter code: Delta-conotoxin-like MVIB (84 aa).

The N-terminal stretch at 1-22 (MKLTCVMIVAVLFLTAWTFVTA) is a signal peptide. Residues 23–51 (DDSRYGLKDLFPKERHEMKNPEASKLNQR) constitute a propeptide that is removed on maturation. Intrachain disulfides connect cysteine 54-cysteine 69, cysteine 61-cysteine 73, and cysteine 68-cysteine 77. A 4-hydroxyproline modification is found at proline 65. At serine 83 the chain carries Serine amide.

It belongs to the conotoxin O1 superfamily. As to expression, expressed by the venom duct.

It is found in the secreted. Its function is as follows. Delta-conotoxins bind to site 6 of voltage-gated sodium channels (Nav) and inhibit the inactivation process. In Conus magus (Magical cone), this protein is Delta-conotoxin-like MVIB.